The sequence spans 332 residues: 2,3-diketo-L-gulonate reductase (332 aa).

His44 serves as the catalytic Proton donor. Residues 168 to 174, 224 to 225, and 304 to 306 each bind NAD(+); these read ITMVDMS, WK, and GHE.

Belongs to the LDH2/MDH2 oxidoreductase family. DlgD subfamily. As to quaternary structure, homodimer.

The protein resides in the cytoplasm. It catalyses the reaction 3-dehydro-L-gulonate + NAD(+) = 2,3-dioxo-L-gulonate + NADH + H(+). It carries out the reaction 3-dehydro-L-gulonate + NADP(+) = 2,3-dioxo-L-gulonate + NADPH + H(+). In terms of biological role, catalyzes the reduction of 2,3-diketo-L-gulonate in the presence of NADH, to form 3-keto-L-gulonate. The chain is 2,3-diketo-L-gulonate reductase from Escherichia coli O6:K15:H31 (strain 536 / UPEC).